The chain runs to 339 residues: Heat stress transcription factor C-1a (339 aa).

Residues 154–217 (EEEDAAEDVL…LAKLADDPNA (64 aa)) are a coiled coil. Positions 176 to 212 (LRHEQTAIGEELARMSQRLQATERRPDQLMSFLAKLA) are hydrophobic repeat HR-A/B. The tract at residues 227–248 (AERKRRRQHLPSHEPTVCPLPP) is disordered. The short motif at 229–233 (RKRRR) is the Nuclear localization signal element.

This sequence belongs to the HSF family. Class C subfamily. Homotrimer. In terms of processing, exhibits temperature-dependent phosphorylation.

Its subcellular location is the nucleus. Its function is as follows. Transcriptional regulator that specifically binds DNA of heat shock promoter elements (HSE). The chain is Heat stress transcription factor C-1a (HSFC1A) from Oryza sativa subsp. japonica (Rice).